A 143-amino-acid polypeptide reads, in one-letter code: Putative phosphotransferase IIA component SgcA (143 aa).

The 143-residue stretch at 1–143 folds into the PTS EIIA type-2 domain; sequence MINDIKWVQA…DDALFALVSG (143 aa). The Tele-phosphohistidine intermediate role is filled by histidine 63.

The protein localises to the cytoplasm. Functionally, the phosphoenolpyruvate-dependent sugar phosphotransferase system (sugar PTS), a major carbohydrate active -transport system, catalyzes the phosphorylation of incoming sugar substrates concomitantly with their translocation across the cell membrane. This Escherichia coli (strain K12) protein is Putative phosphotransferase IIA component SgcA (sgcA).